Reading from the N-terminus, the 461-residue chain is uncharacterized protein (461 aa).

The segment covering Met1 to Tyr19 has biased composition (basic and acidic residues). The tract at residues Met1–Ile21 is disordered.

The protein belongs to the CapA family.

Could be involved in the biosynthesis of a cell wall component. This is an uncharacterized protein from Sinorhizobium fredii (strain NBRC 101917 / NGR234).